We begin with the raw amino-acid sequence, 154 residues long: Major allergen Dau c 1 (154 aa).

It belongs to the BetVI family. In terms of assembly, homodimer.

The sequence is that of Major allergen Dau c 1 from Daucus carota (Wild carrot).